The chain runs to 57 residues: MIKWAIIFAIIGLIAGALGFGGMAGAAMGIAKFLFWAGIIIAIVLFVLGMTIAKKVI.

The next 2 membrane-spanning stretches (helical) occupy residues 4–24 (WAII…GGMA) and 33–53 (FLFW…MTIA).

The protein belongs to the UPF0391 family.

The protein resides in the cell membrane. The polypeptide is UPF0391 membrane protein XOO1885 (Xanthomonas oryzae pv. oryzae (strain KACC10331 / KXO85)).